A 287-amino-acid polypeptide reads, in one-letter code: Lactamase-like protein nscB (287 aa).

Zn(2+) contacts are provided by H62, H64, D66, and H67. The active-site Proton donor/acceptor is the D66.

This sequence belongs to the metallo-beta-lactamase superfamily. Zn(2+) serves as cofactor.

It functions in the pathway secondary metabolite biosynthesis. Lactamase-like protein; part of the gene cluster that mediates the biosynthesis of neosartoricin B, a prenylated anthracenone that probably exhibits T-cell antiproliferative activity, suggestive of a physiological role as an immunosuppressive agent. The non-reducing polyketide synthase nscA probably synthesizes and cyclizes the decaketide backbone. The hydrolase nscB then mediates the product release through hydrolysis followed by spontaneous decarboxylation. The prenyltransferase nscD catalyzes the addition of the dimethylallyl group to the aromatic C5. The FAD-dependent monooxygenase nscC is then responsible for the stereospecific hydroxylation at C2. Neosartoricin B can be converted into two additional compounds neosartoricins C and D. Neosartoricin C is a spirocyclic compound that is cyclized through the attack of C3 hydroxyl on C14, followed by dehydration. On the other hand, neosartoricin D is a further cyclized compound in which attack of C2 on C14 in neosartoricin C results in the formation of the acetal-containing dioxabicyclo-octanone ring. Both of these compounds are novel and possibly represent related metabolites of the gene cluster. This Trichophyton verrucosum (strain HKI 0517) protein is Lactamase-like protein nscB.